The sequence spans 185 residues: Elongation factor P (185 aa).

Belongs to the elongation factor P family.

It is found in the cytoplasm. Its pathway is protein biosynthesis; polypeptide chain elongation. Involved in peptide bond synthesis. Stimulates efficient translation and peptide-bond synthesis on native or reconstituted 70S ribosomes in vitro. Probably functions indirectly by altering the affinity of the ribosome for aminoacyl-tRNA, thus increasing their reactivity as acceptors for peptidyl transferase. This chain is Elongation factor P, found in Tropheryma whipplei (strain TW08/27) (Whipple's bacillus).